Here is a 545-residue protein sequence, read N- to C-terminus: T-complex protein 1 subunit gamma (545 aa).

Met1 is subject to N-acetylmethionine. A disordered region spans residues 1 to 24 (MMGHRPVLVLSQNTKRESGRKVQS). At Ser11 the chain carries Phosphoserine. Lys15 is covalently cross-linked (Glycyl lysine isopeptide (Lys-Gly) (interchain with G-Cter in SUMO2)). An ADP-binding site is contributed by Gly42. Gly42 lines the ATP pocket. Asp93 provides a ligand contact to Mg(2+). Residues Gly94, Thr95, Thr96, Ser97, Thr162, and Lys163 each contribute to the ADP site. ATP is bound by residues Gly94, Thr95, and Thr96. A Phosphoserine modification is found at Ser170. Position 222 is an N6-acetyllysine (Lys222). Residues Ser243 and Ser244 each carry the phosphoserine modification. Phosphotyrosine is present on Tyr247. Residues Lys248 and Lys249 each participate in a glycyl lysine isopeptide (Lys-Gly) (interchain with G-Cter in SUMO2) cross-link. Ser252 carries the post-translational modification Phosphoserine. A disulfide bridge links Cys366 with Cys372. Lys381 participates in a covalent cross-link: Glycyl lysine isopeptide (Lys-Gly) (interchain with G-Cter in SUMO2). Gly411 contacts ADP. ATP is bound at residue Gly411. 2 positions are modified to phosphothreonine: Thr430 and Thr459. Residues Gly482, Glu483, Glu497, and Lys502 each coordinate ADP. Position 482 (Gly482) interacts with ATP. ATP is bound at residue Glu497. The tract at residues 526-545 (HKKKGDDQSRQGGAPDAGQE) is disordered.

Belongs to the TCP-1 chaperonin family. In terms of assembly, component of the chaperonin-containing T-complex (TRiC), a hexadecamer composed of two identical back-to-back stacked rings enclosing a protein folding chamber. Each ring is made up of eight different subunits: TCP1/CCT1, CCT2, CCT3, CCT4, CCT5, CCT6A/CCT6, CCT7, CCT8. Interacts with PACRG. Interacts with DNAAF4. Interacts with DLEC1.

The protein resides in the cytoplasm. The enzyme catalyses ATP + H2O = ADP + phosphate + H(+). Component of the chaperonin-containing T-complex (TRiC), a molecular chaperone complex that assists the folding of actin, tubulin and other proteins upon ATP hydrolysis. The TRiC complex mediates the folding of WRAP53/TCAB1, thereby regulating telomere maintenance. As part of the TRiC complex may play a role in the assembly of BBSome, a complex involved in ciliogenesis regulating transports vesicles to the cilia. The protein is T-complex protein 1 subunit gamma (CCT3) of Homo sapiens (Human).